Here is a 316-residue protein sequence, read N- to C-terminus: L-lactate dehydrogenase 3 (316 aa).

Positions 16, 37, 42, and 68 each coordinate NAD(+). Substrate is bound at residue Arg-91. Residues Ser-104, 121-123 (ASN), and Thr-146 each bind NAD(+). 123–126 (NPVD) is a substrate binding site. Residue 151-154 (DSSR) coordinates substrate. 2 residues coordinate beta-D-fructose 1,6-bisphosphate: Arg-156 and His-171. His-178 (proton acceptor) is an active-site residue. Position 233 (Thr-233) interacts with substrate.

The protein belongs to the LDH/MDH superfamily. LDH family. In terms of assembly, homotetramer.

Its subcellular location is the cytoplasm. It catalyses the reaction (S)-lactate + NAD(+) = pyruvate + NADH + H(+). The protein operates within fermentation; pyruvate fermentation to lactate; (S)-lactate from pyruvate: step 1/1. Allosterically activated by fructose 1,6-bisphosphate (FBP). Its function is as follows. Catalyzes the conversion of lactate to pyruvate. This is L-lactate dehydrogenase 3 from Bacillus cereus (strain ATCC 14579 / DSM 31 / CCUG 7414 / JCM 2152 / NBRC 15305 / NCIMB 9373 / NCTC 2599 / NRRL B-3711).